Here is a 536-residue protein sequence, read N- to C-terminus: Small conductance calcium-activated potassium channel protein 1 (536 aa).

The segment at 1–90 (MSSRSHNGSV…KPPTVSHRLG (90 aa)) is disordered. A compositionally biased stretch (acidic residues) spans 65–75 (QEEEEEEEDED). A helical membrane pass occupies residues 107–127 (LIFGMFGIVVMVTETELSWGV). A helical membrane pass occupies residues 136–156 (FALKCLISLSTVILLGLVILY). A helical membrane pass occupies residues 224–244 (VLLSIPMFLRLYLLARVMLLH). A helical membrane pass occupies residues 273-293 (LMTICPGTVLLVFSISSWIVA). A helical membrane pass occupies residues 313-333 (FLGAMWLISITFLSIGYGDMV). The segment at residues 342-362 (VCLLTGIMGAGCTALVVAVVA) is an intramembrane region (pore-forming). The tract at residues 380-459 (DTQLTKRVKN…LADLAKAQSI (80 aa)) is calmodulin-binding. The helical transmembrane segment at 487–507 (VLGASLQALPSLIAQAICPLP) threads the bilayer. Residues 514–536 (SHLTTAAQSPQSHWLPTTASDCG) form a disordered region. Residues 515-536 (HLTTAAQSPQSHWLPTTASDCG) show a composition bias toward polar residues.

Belongs to the potassium channel KCNN family. KCa2.1/KCNN1 subfamily. Homodimer. Heteromultimer with KCNN2 and KCNN3. The complex is composed of 4 channel subunits each of which binds to a calmodulin subunit which regulates the channel activity through calcium-binding. Interacts with calmodulin. In terms of tissue distribution, widely expressed including brain.

It localises to the membrane. It is found in the cytoplasm. Its subcellular location is the myofibril. The protein resides in the sarcomere. The protein localises to the z line. The catalysed reaction is K(+)(in) = K(+)(out). With respect to regulation, inhibited by bee venom neurotoxin apamin. Inhibited by d-tubocurarine and tetraethylammonium (TEA). Its function is as follows. Small conductance calcium-activated potassium channel that mediates the voltage-independent transmembrane transfer of potassium across the cell membrane through a constitutive interaction with calmodulin which binds the intracellular calcium allowing its opening. The current is characterized by a voltage-independent activation, an intracellular calcium concentration increase-dependent activation and a single-channel conductance of about 3 picosiemens. Also presents an inwardly rectifying current, thus reducing its already small outward conductance of potassium ions, which is particularly the case when the membrane potential displays positive values, above + 20 mV. Activation is followed by membrane hyperpolarization. Thought to regulate neuronal excitability by contributing to the slow component of synaptic afterhyperpolarization. This Rattus norvegicus (Rat) protein is Small conductance calcium-activated potassium channel protein 1.